Consider the following 183-residue polypeptide: Probable chemoreceptor glutamine deamidase CheD (183 aa).

This sequence belongs to the CheD family.

The catalysed reaction is L-glutaminyl-[protein] + H2O = L-glutamyl-[protein] + NH4(+). Probably deamidates glutamine residues to glutamate on methyl-accepting chemotaxis receptors (MCPs), playing an important role in chemotaxis. The sequence is that of Probable chemoreceptor glutamine deamidase CheD from Sinorhizobium medicae (strain WSM419) (Ensifer medicae).